The following is a 143-amino-acid chain: Heat shock protein 16 (143 aa).

The 114-residue stretch at 30–143 (QIPGELSPSI…SQTKKQIAIK (114 aa)) folds into the sHSP domain.

This sequence belongs to the small heat shock protein (HSP20) family.

The protein resides in the cytoplasm. It localises to the nucleus. In Schizosaccharomyces pombe (strain 972 / ATCC 24843) (Fission yeast), this protein is Heat shock protein 16 (hsp16).